A 195-amino-acid polypeptide reads, in one-letter code: Holliday junction branch migration complex subunit RuvA (195 aa).

A domain I region spans residues 1-64 (MIGRIAGLLL…EDAHLLFGFM (64 aa)). Residues 65-140 (TEPERVLFRQ…KISPAITLPE (76 aa)) form a domain II region. The tract at residues 140 to 144 (ETGTA) is flexible linker. A domain III region spans residues 145–195 (MASSTDKDILNALSALGYNDREANWAVGQLSEGVTVSDGIMQSLRLLSKAK).

It belongs to the RuvA family. As to quaternary structure, homotetramer. Forms an RuvA(8)-RuvB(12)-Holliday junction (HJ) complex. HJ DNA is sandwiched between 2 RuvA tetramers; dsDNA enters through RuvA and exits via RuvB. An RuvB hexamer assembles on each DNA strand where it exits the tetramer. Each RuvB hexamer is contacted by two RuvA subunits (via domain III) on 2 adjacent RuvB subunits; this complex drives branch migration. In the full resolvosome a probable DNA-RuvA(4)-RuvB(12)-RuvC(2) complex forms which resolves the HJ.

The protein resides in the cytoplasm. Its function is as follows. The RuvA-RuvB-RuvC complex processes Holliday junction (HJ) DNA during genetic recombination and DNA repair, while the RuvA-RuvB complex plays an important role in the rescue of blocked DNA replication forks via replication fork reversal (RFR). RuvA specifically binds to HJ cruciform DNA, conferring on it an open structure. The RuvB hexamer acts as an ATP-dependent pump, pulling dsDNA into and through the RuvAB complex. HJ branch migration allows RuvC to scan DNA until it finds its consensus sequence, where it cleaves and resolves the cruciform DNA. In Nitrosomonas europaea (strain ATCC 19718 / CIP 103999 / KCTC 2705 / NBRC 14298), this protein is Holliday junction branch migration complex subunit RuvA.